We begin with the raw amino-acid sequence, 420 residues long: Phospholipase A1-II 3 (420 aa).

An N-terminal signal peptide occupies residues 1–21; it reads MCCFLLVSVLLATTLTDVASA. An N-linked (GlcNAc...) asparagine glycan is attached at Asn-231. Ser-240 serves as the catalytic Acyl-ester intermediate. Ser-240 acts as the Charge relay system in catalysis. An N-linked (GlcNAc...) asparagine glycan is attached at Asn-294. Active-site charge relay system residues include Asp-305 and His-343. Positions 367–388 form a coiled coil; that stretch reads VVDRDLALVNKEVDALRDEYQV. A glycan (N-linked (GlcNAc...) asparagine) is linked at Asn-403.

The protein belongs to the AB hydrolase superfamily. Lipase family.

The protein resides in the secreted. Acylhydrolase that catalyzes the hydrolysis of phospholipids at the sn-1 position. The sequence is that of Phospholipase A1-II 3 from Oryza sativa subsp. japonica (Rice).